Consider the following 162-residue polypeptide: Cyclic pyranopterin monophosphate synthase (162 aa).

Substrate-binding positions include Met75 to His77 and Met116 to Glu117. The active site involves Asp131.

It belongs to the MoaC family. In terms of assembly, homohexamer; trimer of dimers.

It carries out the reaction (8S)-3',8-cyclo-7,8-dihydroguanosine 5'-triphosphate = cyclic pyranopterin phosphate + diphosphate. The protein operates within cofactor biosynthesis; molybdopterin biosynthesis. In terms of biological role, catalyzes the conversion of (8S)-3',8-cyclo-7,8-dihydroguanosine 5'-triphosphate to cyclic pyranopterin monophosphate (cPMP). The sequence is that of Cyclic pyranopterin monophosphate synthase from Staphylococcus epidermidis (strain ATCC 35984 / DSM 28319 / BCRC 17069 / CCUG 31568 / BM 3577 / RP62A).